The sequence spans 131 residues: Small ribosomal subunit protein bS6 (131 aa).

The interval Ala-99 to Glu-131 is disordered. Residues Lys-104–Phe-116 show a composition bias toward basic and acidic residues. Residues Thr-120–Glu-131 show a composition bias toward acidic residues.

The protein belongs to the bacterial ribosomal protein bS6 family.

Its function is as follows. Binds together with bS18 to 16S ribosomal RNA. This chain is Small ribosomal subunit protein bS6, found in Sodalis glossinidius (strain morsitans).